A 59-amino-acid polypeptide reads, in one-letter code: Large ribosomal subunit protein bL32 (59 aa).

The span at Met1–Gln19 shows a compositional bias: basic residues. The interval Met1–Trp20 is disordered.

This sequence belongs to the bacterial ribosomal protein bL32 family.

The chain is Large ribosomal subunit protein bL32 from Acidothermus cellulolyticus (strain ATCC 43068 / DSM 8971 / 11B).